A 227-amino-acid chain; its full sequence is MARTRRRGMLAIAMLLMLVPLATGCLRVRASITISPDDLVSGEIIAAAKPKNSKDTGPALDGDVPFSQKVAVSNYDSDGYVGSQAVFSDLTFAELPQLANMNSDAAGVNLSLRRNGNIVILEGRADLTSVSDPDADVELTVAFPAAVTSTNGDRIEPEVVQWKLKPGVVSTMSAQARYTDPNTRSFTGAGIWLGIAAFAAAGVVAVLAWIDRDRSPRLTASGDPPTS.

The N-terminal stretch at 1–24 (MARTRRRGMLAIAMLLMLVPLATG) is a signal peptide. A lipid anchor (N-palmitoyl cysteine) is attached at C25. C25 is lipidated: S-diacylglycerol cysteine. The interval 26-185 (LRVRASITIS…ARYTDPNTRS (160 aa)) is important for bacterial uptake by host macrophages. Residues 190–210 (GIWLGIAAFAAAGVVAVLAWI) form a helical membrane-spanning segment.

Post-translationally, a shorter form (about 20 kDa) is secreted; upon overexpression of the whole protein in M.smegmatis the C-terminus of the short form is about residue 187, suggesting it is generated by cleavage of the protein before its C-terminal transmembrane domain.

It localises to the membrane. Its subcellular location is the secreted. The protein localises to the cell wall. Functionally, a putative lipoprotein that seems to be specialized for the initial steps of macrophage infection. A non-acylated fragment (residues 26-185) binds phosphatidyl-myo-inositol mannosides (PIMs). Limits, in a TLR2-dependent fashion, bacterial uptake by host (mouse); this effect may be mediated by nonacylated fragment 26-185. Plays a TLR2-dependent role in host phagosome maturation arrest. Plays a TLR2-independent role in chemokine production during the first 24 hours of mouse infection. This Mycobacterium tuberculosis (strain ATCC 25618 / H37Rv) protein is Protein LppM (lppM).